A 177-amino-acid chain; its full sequence is Large ribosomal subunit protein uL6 (177 aa).

It belongs to the universal ribosomal protein uL6 family. As to quaternary structure, part of the 50S ribosomal subunit.

In terms of biological role, this protein binds to the 23S rRNA, and is important in its secondary structure. It is located near the subunit interface in the base of the L7/L12 stalk, and near the tRNA binding site of the peptidyltransferase center. In Rhodopseudomonas palustris (strain BisA53), this protein is Large ribosomal subunit protein uL6.